The chain runs to 156 residues: Small ribosomal subunit protein uS7 (156 aa).

It belongs to the universal ribosomal protein uS7 family. Part of the 30S ribosomal subunit. Contacts proteins S9 and S11.

In terms of biological role, one of the primary rRNA binding proteins, it binds directly to 16S rRNA where it nucleates assembly of the head domain of the 30S subunit. Is located at the subunit interface close to the decoding center, probably blocks exit of the E-site tRNA. The sequence is that of Small ribosomal subunit protein uS7 from Pectobacterium atrosepticum (strain SCRI 1043 / ATCC BAA-672) (Erwinia carotovora subsp. atroseptica).